The sequence spans 688 residues: MMLNKKVVALCTLTLHLFCIFLCLGKEVRSEENGKIQDDAKKIVSELRFLEKVEDVIEKSNIGGNEVDADENSFNPDTEVPIEEIEEIKMRELKDVKEEKNKNDNHNNNNNNISSSSSSSSNTFGEEKEEVSKKKKKLRLIVSENHATTPSFFQESLLEPDVLSFLESKGNLSNLKNINSMIIELKEDTTDDELISYIKILEEKGALIESDKLVSADNIDISGIKDAIRRGEENIDVNDYKSMLEVENDAEDYDKMFGMFNESHAATSKRKRHSTNERGYDTFSSPSYKTYSKSDYLYDDDNNNNNYYYSHSSNGHNSSSRNSSSSRSRPGKYHFNDEFRNLQWGLDLSRLDETQELINEHQVMSTRICVIDSGIDYNHPDLKDNIELNLKELHGRKGFDDDNNGIVDDIYGANFVNNSGNPMDDNYHGTHVSGIISAIGNNNIGVVGVDVNSKLIICKALDEHKLGRLGDMFKCLDYCISRNAHMINGSFSFDEYSGIFNSSVEYLQRKGILFFVSASNCSHPKSSTPDIRKCDLSINAKYPPILSTVYDNVISVANLKKNDNNNHYSLSINSFYSNKYCQLAAPGTNIYSTAPHNSYRKLNGTSMAAPHVAAIASLIFSINPDLSYKKVIQILKDSIVYLPSLKNMVAWAGYADINKAVNLAIKSKKTYINSNISNKWKKKSRYLH.

The signal sequence occupies residues 1–25 (MMLNKKVVALCTLTLHLFCIFLCLG). Positions 26–217 (KEVRSEENGK…IESDKLVSAD (192 aa)) are cleaved as a propeptide — inhibition peptide. A disordered region spans residues 99–129 (EKNKNDNHNNNNNNISSSSSSSSNTFGEEKE). The segment covering 106-122 (HNNNNNNISSSSSSSSN) has biased composition (low complexity). A glycan (N-linked (GlcNAc...) asparagine) is linked at Asn112. The Ca(2+) site is built by Asn145, Thr148, and Pro150. An N-linked (GlcNAc...) asparagine glycan is attached at Asn171. Gly205 serves as a coordination point for Ca(2+). Asn261 is a glycosylation site (N-linked (GlcNAc...) asparagine). Disordered stretches follow at residues 264 to 284 (HAAT…DTFS) and 303 to 332 (NNNN…RPGK). Over residues 303–328 (NNNNYYYSHSSNGHNSSSRNSSSSRS) the composition is skewed to low complexity. 2 N-linked (GlcNAc...) asparagine glycosylation sites follow: Asn317 and Asn322. Asp337 lines the Ca(2+) pocket. One can recognise a Peptidase S8 domain in the interval 343 to 661 (QWGLDLSRLD…AGYADINKAV (319 aa)). 2 disulfide bridges follow: Cys369-Cys479 and Cys458-Cys475. Asp372 (charge relay system) is an active-site residue. Asp381, Glu392, Arg396, Phe399, Asp400, Asp401, Asp402, Asn404, Ile406, Asp408, and Asp409 together coordinate Ca(2+). A glycan (N-linked (GlcNAc...) asparagine) is linked at Asn417. His428 acts as the Charge relay system in catalysis. Positions 439, 442, 444, and 446 each coordinate Ca(2+). 3 N-linked (GlcNAc...) asparagine glycosylation sites follow: Asn488, Asn501, and Asn520. Cys521 and Cys534 are joined by a disulfide. N-linked (GlcNAc...) asparagine glycosylation occurs at Asn603. Ser606 (charge relay system) is an active-site residue. N-linked (GlcNAc...) asparagine glycosylation occurs at Asn675.

Belongs to the peptidase S8 family. In terms of assembly, heterodimer between p54 form and prodomain p31; the interaction inhibits p54 catalytic activity. Heterodimer p31-p54 is monomeric at basic pH and dimeric at acidic pH; dimerization is driven by the N-terminal prodomain (p31). Requires Ca(2+) as cofactor. The prodomain (p31) is cleaved, probably by autocatalysis, during the transport to or in the Golgi apparatus, and remains non-covalently associated with the p54 form as an inhibitor. p54 is further cleaved into the p47 form. The p54-to-p47 conversion can be also autocatalytic. This cleavage is likely occurring in the exoneme prior to egress and is mediated by PMX/plasmepsin X. Heterodimer p31-p54 is activated by cleavage of prodomain (p31) by the aspartic protease PMX; cleavage by PMX abolishes inhibitory capacity of p31. Primary autocatalytic processing of SUB1 is essential for parasite growth; the p54-to-p47 conversion is dispensable for SUB1 functions in the parasites. In terms of processing, the disulfide bond between Cys-521 and Cys-534 acts as a redox-sensitive disulfide switch. The oxidized form is required for catalytic activity. Post-translationally, the relevance of the N-glycosylation is not clear. In an insect expression system, SUB1 glycosylation appears to affect its processing into the active mature form suggesting that SUB1 may not be N-glycosylated in parasites.

The protein localises to the secreted. It localises to the parasitophorous vacuole lumen. It catalyses the reaction Hydrolysis of proteins with broad specificity for peptide bonds, and a preference for a large uncharged residue in P1. Hydrolyzes peptide amides.. With respect to regulation, p54 and probably p47 forms are inhibited by the non-covalent interaction with the cleaved propeptide. Inhibited by subtilisin propeptide-like protein SUB1-ProM. Inhibited by small molecule MRT12113. Serine protease which plays an essential role in merozoite invasion of and egress from host erythrocytes by processing and activating various merozoite surface and parasitophorous vacuole proteins. Mediates the proteolytic maturation of serine proteases SERA4, SERA5 and SERA6 just prior to merozoite egress. Prior to merozoite egress, cleaves merozoite surface proteins MSP1, MSP6 and MSP7, which form the MSP1/6/7 complex, and thereby may prime the parasite cell surface for invasion of fresh erythrocytes. Prior to merozoite egress, cleaves MSRP2 converting it to MSRP2 p25 form, and RAP1 converting it to RAP1 p67 form. In Plasmodium falciparum (isolate 3D7), this protein is Subtilisin-like protease 1.